A 535-amino-acid chain; its full sequence is Inositol 1,4,5-trisphosphate receptor-interacting protein-like 2 (535 aa).

Residues 1-32 (MSVRYTLNLRVFWPLVTGLCTALVCLYHALRS) form the signal peptide. The Extracellular portion of the chain corresponds to 33–43 (SEDARAESPDG). Residues 44 to 64 (ADSGFPLLKVAILLLLGYILL) traverse the membrane as a helical segment. At 65-535 (RCRHAIRQRL…RIQGSPEDEP (471 aa)) the chain is on the cytoplasmic side. Residue Ser-139 is modified to Phosphoserine.

It belongs to the ITPRIP family.

The protein resides in the membrane. The protein is Inositol 1,4,5-trisphosphate receptor-interacting protein-like 2 (Itpripl2) of Mus musculus (Mouse).